A 94-amino-acid polypeptide reads, in one-letter code: Scorpine-like-1 (94 aa).

Residues 1–18 (MNTKFTVLIFLGVIVVSY) form the signal peptide. In terms of domain architecture, BetaSPN-type CS-alpha/beta spans 54–94 (EYGCMMDISWNKDCQRHCQSTEQKDGICHGMKCKCGKPRSY). 3 disulfide bridges follow: cysteine 57–cysteine 81, cysteine 67–cysteine 86, and cysteine 71–cysteine 88.

It belongs to the long chain scorpion toxin family. Class 3 subfamily. Expressed by the venom gland.

The protein resides in the secreted. Functionally, has antibacterial activity. This chain is Scorpine-like-1, found in Urodacus yaschenkoi (Inland robust scorpion).